We begin with the raw amino-acid sequence, 162 residues long: Peptide methionine sulfoxide reductase MsrA (162 aa).

Residue Cys16 is part of the active site.

It belongs to the MsrA Met sulfoxide reductase family.

It catalyses the reaction L-methionyl-[protein] + [thioredoxin]-disulfide + H2O = L-methionyl-(S)-S-oxide-[protein] + [thioredoxin]-dithiol. It carries out the reaction [thioredoxin]-disulfide + L-methionine + H2O = L-methionine (S)-S-oxide + [thioredoxin]-dithiol. Its function is as follows. Has an important function as a repair enzyme for proteins that have been inactivated by oxidation. Catalyzes the reversible oxidation-reduction of methionine sulfoxide in proteins to methionine. In Geobacter sulfurreducens (strain ATCC 51573 / DSM 12127 / PCA), this protein is Peptide methionine sulfoxide reductase MsrA.